The primary structure comprises 86 residues: Large ribosomal subunit protein bL31B (86 aa).

Belongs to the bacterial ribosomal protein bL31 family. Type B subfamily. In terms of assembly, part of the 50S ribosomal subunit.

In Vibrio vulnificus (strain YJ016), this protein is Large ribosomal subunit protein bL31B.